Consider the following 337-residue polypeptide: HTH-type transcriptional repressor PurR (337 aa).

In terms of domain architecture, HTH lacI-type spans 2-56 (ATIKDVAKLAAVSTTTVSHVINKTRFVAEATQKRVWEAVEELNYAPSAVARSLKC). A DNA-binding region (H-T-H motif) is located at residues 4-23 (IKDVAKLAAVSTTTVSHVIN). A DNA-binding region spans residues 48–56 (SAVARSLKC). Hypoxanthine contacts are provided by phenylalanine 73, lysine 189, threonine 191, phenylalanine 220, and aspartate 276.

Homodimer.

The protein operates within purine metabolism; purine nucleotide biosynthesis [regulation]. In terms of biological role, is the main repressor of the genes involved in the de novo synthesis of purine nucleotides, regulating purB, purC, purEK, purF, purHD, purL, purMN and guaBA expression. PurR is allosterically activated to bind its cognate DNA by binding the purine corepressors, hypoxanthine or guanine, thereby effecting transcription repression. The polypeptide is HTH-type transcriptional repressor PurR (Aliivibrio fischeri (strain MJ11) (Vibrio fischeri)).